Here is a 66-residue protein sequence, read N- to C-terminus: SPbeta prophage-derived uncharacterized protein YosK (66 aa).

The sequence is that of SPbeta prophage-derived uncharacterized protein YosK (yosK) from Bacillus subtilis (strain 168).